The chain runs to 379 residues: Cytochrome b (379 aa).

4 consecutive transmembrane segments (helical) span residues 33-53 (FGSLLGACLIIQVITGLFLAM), 77-98 (WMIRYLHANGASMFFLCLFIHV), 113-133 (WNVGIILLFSVMATAFMGYVL), and 178-198 (FFALHFILPFIISAWVMIHLL). Residues histidine 83 and histidine 97 each contribute to the heme b site. Residues histidine 182 and histidine 196 each coordinate heme b. Histidine 201 contributes to the a ubiquinone binding site. Helical transmembrane passes span 226–246 (TKDFLGLLLLILLLMTLALFY), 288–308 (LGGVVALILSILILMIIPFLQ), 320–340 (LSQFLFWILVADLLTLTWIGG), and 347–367 (FISIGQTASMLYFSLMIFIMP).

Belongs to the cytochrome b family. As to quaternary structure, the cytochrome bc1 complex contains 11 subunits: 3 respiratory subunits (MT-CYB, CYC1 and UQCRFS1), 2 core proteins (UQCRC1 and UQCRC2) and 6 low-molecular weight proteins (UQCRH/QCR6, UQCRB/QCR7, UQCRQ/QCR8, UQCR10/QCR9, UQCR11/QCR10 and a cleavage product of UQCRFS1). This cytochrome bc1 complex then forms a dimer. Heme b serves as cofactor.

Its subcellular location is the mitochondrion inner membrane. In terms of biological role, component of the ubiquinol-cytochrome c reductase complex (complex III or cytochrome b-c1 complex) that is part of the mitochondrial respiratory chain. The b-c1 complex mediates electron transfer from ubiquinol to cytochrome c. Contributes to the generation of a proton gradient across the mitochondrial membrane that is then used for ATP synthesis. In Lepilemur septentrionalis (Northern sportive lemur), this protein is Cytochrome b (MT-CYB).